The following is a 201-amino-acid chain: Oligoribonuclease (201 aa).

In terms of domain architecture, Exonuclease spans 5–169 (MVWIDCEMTG…ADIRDSITEL (165 aa)). Tyrosine 126 is a catalytic residue.

This sequence belongs to the oligoribonuclease family.

The protein resides in the cytoplasm. Its function is as follows. 3'-to-5' exoribonuclease specific for small oligoribonucleotides. The sequence is that of Oligoribonuclease from Streptomyces griseus.